The following is a 588-amino-acid chain: Calicin (588 aa).

A BTB domain is found at 28–98; that stretch reads WDMALTVDHH…FYSGKVVISE (71 aa). The 103-residue stretch at 133-235 folds into the BACK domain; it reads CLRYLFLAEL…NAVSNKTLMF (103 aa). Ser149 carries the post-translational modification Phosphoserine. Kelch repeat units lie at residues 280 to 327, 328 to 375, 377 to 423, 425 to 475, 476 to 525, and 526 to 580; these read SVVI…AAGR, YIYI…TCGG, VYSV…TKGD, NLYI…SFHQ, DNIL…IGDS, and KVFV…LAKL.

In terms of assembly, interacts with CYLC1; the interaction may be relevant for proper acrosome attachment to the nuclear envelope. Expressed in testis and in spermatozoa.

Its subcellular location is the cytoplasm. The protein resides in the cytoskeleton. The protein localises to the perinuclear theca. It is found in the calyx. In terms of biological role, required for both nuclear and acrosomal shaping during spermiogenesis. In Mus musculus (Mouse), this protein is Calicin (Ccin).